Here is a 212-residue protein sequence, read N- to C-terminus: dTTP/UTP pyrophosphatase (212 aa).

The Proton acceptor role is filled by D88.

It belongs to the Maf family. YhdE subfamily. The cofactor is a divalent metal cation.

It is found in the cytoplasm. It catalyses the reaction dTTP + H2O = dTMP + diphosphate + H(+). The enzyme catalyses UTP + H2O = UMP + diphosphate + H(+). Functionally, nucleoside triphosphate pyrophosphatase that hydrolyzes dTTP and UTP. May have a dual role in cell division arrest and in preventing the incorporation of modified nucleotides into cellular nucleic acids. The chain is dTTP/UTP pyrophosphatase from Colwellia psychrerythraea (strain 34H / ATCC BAA-681) (Vibrio psychroerythus).